Reading from the N-terminus, the 101-residue chain is NAD(P)H-quinone oxidoreductase subunit 4L, chloroplastic (101 aa).

3 helical membrane-spanning segments follow: residues 2–22 (ILDS…YGLI), 32–52 (MSLE…SNFI), and 64–84 (IFIM…ILAI).

This sequence belongs to the complex I subunit 4L family. NDH is composed of at least 16 different subunits, 5 of which are encoded in the nucleus.

It is found in the plastid. It localises to the chloroplast thylakoid membrane. It catalyses the reaction a plastoquinone + NADH + (n+1) H(+)(in) = a plastoquinol + NAD(+) + n H(+)(out). It carries out the reaction a plastoquinone + NADPH + (n+1) H(+)(in) = a plastoquinol + NADP(+) + n H(+)(out). In terms of biological role, NDH shuttles electrons from NAD(P)H:plastoquinone, via FMN and iron-sulfur (Fe-S) centers, to quinones in the photosynthetic chain and possibly in a chloroplast respiratory chain. The immediate electron acceptor for the enzyme in this species is believed to be plastoquinone. Couples the redox reaction to proton translocation, and thus conserves the redox energy in a proton gradient. The protein is NAD(P)H-quinone oxidoreductase subunit 4L, chloroplastic of Chlorokybus atmophyticus (Soil alga).